The following is a 375-amino-acid chain: DNA replication and repair protein RecF (375 aa).

ATP is bound at residue glycine 30–threonine 37.

This sequence belongs to the RecF family.

Its subcellular location is the cytoplasm. In terms of biological role, the RecF protein is involved in DNA metabolism; it is required for DNA replication and normal SOS inducibility. RecF binds preferentially to single-stranded, linear DNA. It also seems to bind ATP. The sequence is that of DNA replication and repair protein RecF from Bacillus cereus (strain B4264).